A 139-amino-acid polypeptide reads, in one-letter code: Transcription antitermination protein NusB (139 aa).

It belongs to the NusB family.

In terms of biological role, involved in transcription antitermination. Required for transcription of ribosomal RNA (rRNA) genes. Binds specifically to the boxA antiterminator sequence of the ribosomal RNA (rrn) operons. This Escherichia fergusonii (strain ATCC 35469 / DSM 13698 / CCUG 18766 / IAM 14443 / JCM 21226 / LMG 7866 / NBRC 102419 / NCTC 12128 / CDC 0568-73) protein is Transcription antitermination protein NusB.